The primary structure comprises 283 residues: Lysozyme-like protein 7 (283 aa).

An N-terminal signal peptide occupies residues 1–18; the sequence is MAHKSIVIFSVLAVLCHS. The Ch-type lysozyme domain occupies 53–273; it reads YAYALDIYVQ…AVEEDGKIYA (221 aa).

The protein belongs to the glycosyl hydrolase 25 family. Expressed in intestine. Expressed in rectal gland cells and head neurons.

Plays a role in resistance to Gram-positive bacteria B.thuringiensis and M.nematophilum and Gram-negative bacteria S.boydii or S.flexneri infection and to fungus C.neoformans infection. Plays a role in susceptibility to Gram-negative bacterium S.typhimurium infection. In Caenorhabditis elegans, this protein is Lysozyme-like protein 7.